The sequence spans 891 residues: Valine--tRNA ligase (891 aa).

Positions 43-53 match the 'HIGH' region motif; the sequence is PFTSGTLHLGH. The 'KMSKS' region motif lies at 536-540; it reads KMSKS. K539 serves as a coordination point for ATP.

This sequence belongs to the class-I aminoacyl-tRNA synthetase family. ValS type 2 subfamily.

Its subcellular location is the cytoplasm. The catalysed reaction is tRNA(Val) + L-valine + ATP = L-valyl-tRNA(Val) + AMP + diphosphate. Catalyzes the attachment of valine to tRNA(Val). As ValRS can inadvertently accommodate and process structurally similar amino acids such as threonine, to avoid such errors, it has a 'posttransfer' editing activity that hydrolyzes mischarged Thr-tRNA(Val) in a tRNA-dependent manner. This Pyrococcus abyssi (strain GE5 / Orsay) protein is Valine--tRNA ligase.